The chain runs to 308 residues: Lipoyl synthase 2 (308 aa).

Positions 49, 54, 60, 75, 79, 82, and 300 each coordinate [4Fe-4S] cluster. Residues Tyr-61–Lys-289 form the Radical SAM core domain.

Belongs to the radical SAM superfamily. Lipoyl synthase family. The cofactor is [4Fe-4S] cluster.

The protein localises to the cytoplasm. It catalyses the reaction [[Fe-S] cluster scaffold protein carrying a second [4Fe-4S](2+) cluster] + N(6)-octanoyl-L-lysyl-[protein] + 2 oxidized [2Fe-2S]-[ferredoxin] + 2 S-adenosyl-L-methionine + 4 H(+) = [[Fe-S] cluster scaffold protein] + N(6)-[(R)-dihydrolipoyl]-L-lysyl-[protein] + 4 Fe(3+) + 2 hydrogen sulfide + 2 5'-deoxyadenosine + 2 L-methionine + 2 reduced [2Fe-2S]-[ferredoxin]. It functions in the pathway protein modification; protein lipoylation via endogenous pathway; protein N(6)-(lipoyl)lysine from octanoyl-[acyl-carrier-protein]: step 2/2. Functionally, catalyzes the radical-mediated insertion of two sulfur atoms into the C-6 and C-8 positions of the octanoyl moiety bound to the lipoyl domains of lipoate-dependent enzymes, thereby converting the octanoylated domains into lipoylated derivatives. The protein is Lipoyl synthase 2 of Prochlorococcus marinus (strain SARG / CCMP1375 / SS120).